The following is a 196-amino-acid chain: Molybdenum cofactor guanylyltransferase (196 aa).

GTP is bound by residues 10 to 12 (LAG), Lys23, Asn51, Asp69, and Asp99. Residue Asp99 coordinates Mg(2+).

Belongs to the MobA family. Monomer. Mg(2+) is required as a cofactor.

It localises to the cytoplasm. The enzyme catalyses Mo-molybdopterin + GTP + H(+) = Mo-molybdopterin guanine dinucleotide + diphosphate. Transfers a GMP moiety from GTP to Mo-molybdopterin (Mo-MPT) cofactor (Moco or molybdenum cofactor) to form Mo-molybdopterin guanine dinucleotide (Mo-MGD) cofactor. The polypeptide is Molybdenum cofactor guanylyltransferase (Shewanella sp. (strain W3-18-1)).